Here is an 85-residue protein sequence, read N- to C-terminus: Sec-independent protein translocase protein TatA (85 aa).

The helical transmembrane segment at 1-21 (MGSFSIWHWLIVLLIIMMVFG) threads the bilayer. Positions 39–51 (FKEGMREGSEDKP) are enriched in basic and acidic residues. Residues 39-85 (FKEGMREGSEDKPAGSQQGQQAAGQPPRELHDSTTIDVEARDKSKQG) are disordered. The span at 52-65 (AGSQQGQQAAGQPP) shows a compositional bias: low complexity. Residues 66-85 (RELHDSTTIDVEARDKSKQG) are compositionally biased toward basic and acidic residues.

The protein belongs to the TatA/E family. The Tat system comprises two distinct complexes: a TatABC complex, containing multiple copies of TatA, TatB and TatC subunits, and a separate TatA complex, containing only TatA subunits. Substrates initially bind to the TatABC complex, which probably triggers association of the separate TatA complex to form the active translocon.

The protein resides in the cell inner membrane. Part of the twin-arginine translocation (Tat) system that transports large folded proteins containing a characteristic twin-arginine motif in their signal peptide across membranes. TatA could form the protein-conducting channel of the Tat system. This chain is Sec-independent protein translocase protein TatA, found in Ralstonia nicotianae (strain ATCC BAA-1114 / GMI1000) (Ralstonia solanacearum).